A 275-amino-acid polypeptide reads, in one-letter code: NH(3)-dependent NAD(+) synthetase (275 aa).

47 to 54 (GISGGQDS) lines the ATP pocket. A Mg(2+)-binding site is contributed by Asp53. Deamido-NAD(+) is bound at residue Arg141. Thr161 is a binding site for ATP. Mg(2+) is bound at residue Glu166. Residues Lys174 and Asp181 each contribute to the deamido-NAD(+) site. Lys190 and Thr212 together coordinate ATP. 261-262 (HK) is a deamido-NAD(+) binding site.

Belongs to the NAD synthetase family. In terms of assembly, homodimer.

It carries out the reaction deamido-NAD(+) + NH4(+) + ATP = AMP + diphosphate + NAD(+) + H(+). Its pathway is cofactor biosynthesis; NAD(+) biosynthesis; NAD(+) from deamido-NAD(+) (ammonia route): step 1/1. Functionally, catalyzes the ATP-dependent amidation of deamido-NAD to form NAD. Uses ammonia as a nitrogen source. This is NH(3)-dependent NAD(+) synthetase from Lacticaseibacillus casei (strain BL23) (Lactobacillus casei).